The sequence spans 103 residues: Pyrimidine/purine nucleoside phosphorylase (103 aa).

The protein belongs to the nucleoside phosphorylase PpnP family.

It catalyses the reaction a purine D-ribonucleoside + phosphate = a purine nucleobase + alpha-D-ribose 1-phosphate. It carries out the reaction adenosine + phosphate = alpha-D-ribose 1-phosphate + adenine. The enzyme catalyses cytidine + phosphate = cytosine + alpha-D-ribose 1-phosphate. The catalysed reaction is guanosine + phosphate = alpha-D-ribose 1-phosphate + guanine. It catalyses the reaction inosine + phosphate = alpha-D-ribose 1-phosphate + hypoxanthine. It carries out the reaction thymidine + phosphate = 2-deoxy-alpha-D-ribose 1-phosphate + thymine. The enzyme catalyses uridine + phosphate = alpha-D-ribose 1-phosphate + uracil. The catalysed reaction is xanthosine + phosphate = alpha-D-ribose 1-phosphate + xanthine. Its function is as follows. Catalyzes the phosphorolysis of diverse nucleosides, yielding D-ribose 1-phosphate and the respective free bases. Can use uridine, adenosine, guanosine, cytidine, thymidine, inosine and xanthosine as substrates. Also catalyzes the reverse reactions. In Shewanella baltica (strain OS155 / ATCC BAA-1091), this protein is Pyrimidine/purine nucleoside phosphorylase.